A 700-amino-acid polypeptide reads, in one-letter code: MSSVRRPSKLLSEKQSDKLAQIIQNFFLKAAHVIFHFRVAFPSVVLQPDDSYGAMGDSFAQSKYNNRWFNLDLGNYEIPRTELSLWRNKDILSLPPLVLETFLDLRGLSSNQTLMLDDVIVKTSKKSEIVLERWLIEFDLSTFDNEVMEFPSIYKKIIILFRSLYLLAGLLPSYKLRDKLVKSKSKNSAIHVSCRILDGSKPITSKGRIGLSKKLLSEDEHTSSKKLQPILTPIGALRVSVSYRTNCNFQVSDNEEALSSQFMLDHLPSVRTNYDSDGNSLTSPMDYLQNRVSSASIHLSDQSPRRRSSTRSVQLFKVGSINSSSSPPPGATQSNQSVSSFSTSKPIPVTLNKTNSSASLVPILRQNRDSLPKSIGSMVQNQMQETGHQVSSNSRRFSSSFGSRFRTVSSRNNSLDGQLVVANQPFSTPNNPILHNFRSRNKSPSVSSTELGPSSSIYMDDDLDSFMKMLDSKPDLRFPSNSPSVYEDPLANFKTFQKSNDFLTLEQQQHGSPSSNQIMIHSQSQTSQSQVFKRTVSSDRSRRGSVSSNYSPSSQALRPGVSAPMVTPSVTYGKFHASSGSPSNSSLAQYLRHNSSPPASATAVATVHNSLRRLTSSSQRTNTNSTNSSTRPVNPELLKLKSFNEDVFESDDDEHDEHSPRSTDTKSRNTGPSSGHAEDDEDDLLFAMSDMTLAKNNQEF.

A disordered region spans residues 319–352 (GSINSSSSPPPGATQSNQSVSSFSTSKPIPVTLN). Residues 332 to 344 (TQSNQSVSSFSTS) are compositionally biased toward low complexity. Positions 399 to 407 (SSFGSRFRT) are ATG17-binding. Residues 428–487 (TPNNPILHNFRSRNKSPSVSSTELGPSSSIYMDDDLDSFMKMLDSKPDLRFPSNSPSVYE) form an ATG1-binding region. Residues 506–532 (EQQQHGSPSSNQIMIHSQSQTSQSQVF) are compositionally biased toward polar residues. 3 disordered regions span residues 506–562 (EQQQ…PGVS), 576–637 (HASS…NPEL), and 649–700 (ESDD…NQEF). A compositionally biased stretch (low complexity) spans 595 to 631 (SSPPASATAVATVHNSLRRLTSSSQRTNTNSTNSSTR). Residues 656–667 (DEHSPRSTDTKS) are compositionally biased toward basic and acidic residues.

The protein belongs to the ATG13 family. Fungi subfamily. As to quaternary structure, hypophosphorylated form interacts with ATG1 to form the ATG1-ATG13 kinase complex. The ATG1-ATG13 complex interacts with the ATG17-ATG29-ATG31 complex through direct interaction with ATG17. Interacts with VAC8.

It is found in the cytoplasm. Its subcellular location is the preautophagosomal structure. Activates the ATG1 kinase in a nutritional condition dependent manner through the TOR pathway, leading to autophagy. Involved in ATG9 and ATG23 cycling through the pre-autophagosomal structure. Also involved in cytoplasm to vacuole transport (Cvt) and more specifically in Cvt vesicle formation. Seems to play a role in the switching machinery regulating the conversion between the Cvt pathway and autophagy. Finally, ATG13 is also required for glycogen storage during stationary phase. Its function is as follows. Acts as a negative regulator of xylose alcoholic fermentation, a role that is not related to autophagy. The protein is Autophagy-related protein 13 of Ogataea parapolymorpha (strain ATCC 26012 / BCRC 20466 / JCM 22074 / NRRL Y-7560 / DL-1) (Yeast).